We begin with the raw amino-acid sequence, 421 residues long: Serine--tRNA ligase (421 aa).

Residue 229-231 (TAE) participates in L-serine binding. Residue 260-262 (RSE) participates in ATP binding. Glu283 contacts L-serine. 347-350 (EISS) is an ATP binding site. Residue Ser382 participates in L-serine binding.

It belongs to the class-II aminoacyl-tRNA synthetase family. Type-1 seryl-tRNA synthetase subfamily. Homodimer. The tRNA molecule binds across the dimer.

It is found in the cytoplasm. It catalyses the reaction tRNA(Ser) + L-serine + ATP = L-seryl-tRNA(Ser) + AMP + diphosphate + H(+). It carries out the reaction tRNA(Sec) + L-serine + ATP = L-seryl-tRNA(Sec) + AMP + diphosphate + H(+). Its pathway is aminoacyl-tRNA biosynthesis; selenocysteinyl-tRNA(Sec) biosynthesis; L-seryl-tRNA(Sec) from L-serine and tRNA(Sec): step 1/1. Catalyzes the attachment of serine to tRNA(Ser). Is also able to aminoacylate tRNA(Sec) with serine, to form the misacylated tRNA L-seryl-tRNA(Sec), which will be further converted into selenocysteinyl-tRNA(Sec). This Symbiobacterium thermophilum (strain DSM 24528 / JCM 14929 / IAM 14863 / T) protein is Serine--tRNA ligase.